A 282-amino-acid polypeptide reads, in one-letter code: Small ribosomal subunit protein uS3 (282 aa).

The KH type-2 domain occupies 43–111 (IRRLMSKGME…QVQLNILEVK (69 aa)). Positions 217-282 (AQSQAAAPRA…IGKGSNGTEA (66 aa)) are disordered. The segment covering 228–240 (RRNERGDRPDRGA) has biased composition (basic and acidic residues). The segment covering 256–269 (AVATGSAPTGTAAT) has biased composition (low complexity).

Belongs to the universal ribosomal protein uS3 family. As to quaternary structure, part of the 30S ribosomal subunit. Forms a tight complex with proteins S10 and S14.

Binds the lower part of the 30S subunit head. Binds mRNA in the 70S ribosome, positioning it for translation. The protein is Small ribosomal subunit protein uS3 of Kineococcus radiotolerans (strain ATCC BAA-149 / DSM 14245 / SRS30216).